Here is a 550-residue protein sequence, read N- to C-terminus: Arginine--tRNA ligase (550 aa).

Positions 130–140 match the 'HIGH' region motif; that stretch reads ANPTGPIHLGG.

This sequence belongs to the class-I aminoacyl-tRNA synthetase family. Monomer.

It localises to the cytoplasm. It carries out the reaction tRNA(Arg) + L-arginine + ATP = L-arginyl-tRNA(Arg) + AMP + diphosphate. This Corynebacterium glutamicum (strain ATCC 13032 / DSM 20300 / JCM 1318 / BCRC 11384 / CCUG 27702 / LMG 3730 / NBRC 12168 / NCIMB 10025 / NRRL B-2784 / 534) protein is Arginine--tRNA ligase (argS).